A 208-amino-acid polypeptide reads, in one-letter code: MKTLVILSSILGDRSHSKQLADHLIQRLRQHEPDGSIRVRDLAADPVPYFDGATAGALFTPADQRTAEQAAIVARSDALVAELFDADRIVFAVPVYNFGLPAQLKSYIDQIARAGVTFRYTAQGVPEGLLKNKQVVVLSARGGKAEGTPADTLTPYLAQVLGFVGLVDPVFISAEGMAMGELAAQDGLALARQRIDALVAGAPQQVAA.

Residues S9 and 15-17 (SHS) each bind FMN.

It belongs to the azoreductase type 1 family. In terms of assembly, homodimer. Requires FMN as cofactor.

The catalysed reaction is 2 a quinone + NADH + H(+) = 2 a 1,4-benzosemiquinone + NAD(+). The enzyme catalyses N,N-dimethyl-1,4-phenylenediamine + anthranilate + 2 NAD(+) = 2-(4-dimethylaminophenyl)diazenylbenzoate + 2 NADH + 2 H(+). In terms of biological role, quinone reductase that provides resistance to thiol-specific stress caused by electrophilic quinones. Its function is as follows. Also exhibits azoreductase activity. Catalyzes the reductive cleavage of the azo bond in aromatic azo compounds to the corresponding amines. This chain is FMN-dependent NADH:quinone oxidoreductase, found in Bordetella petrii (strain ATCC BAA-461 / DSM 12804 / CCUG 43448).